A 742-amino-acid chain; its full sequence is Condensin complex subunit 2 (742 aa).

Disordered stretches follow at residues 1-62, 151-172, 452-473, and 564-604; these read MKRA…FNSS, QQTE…KKER, FNSS…STER, and IQPH…PSSS. Positions 21–39 are enriched in basic and acidic residues; the sequence is ALEKKRAKENSRKQRELRR. Residues 53-62 show a composition bias toward polar residues; that stretch reads LNNSSPFNSS. The segment covering 154 to 165 has biased composition (acidic residues); sequence EEGEDAENDDED. Composition is skewed to polar residues over residues 452–470 and 592–604; these read FNSS…SLSS and PKQT…PSSS.

It belongs to the CND2 (condensin subunit 2) family. As to quaternary structure, component of the condensin complex, which contains the cut14/smc2 and cut3/smc2 heterodimer, and three non SMC subunits that probably regulate the complex: cnd1, cnd2 and cnd3.

It localises to the nucleus. The protein localises to the cytoplasm. Its subcellular location is the chromosome. In terms of biological role, regulatory subunit of the condensin complex, a complex required for conversion of interphase chromatin into mitotic-like condense chromosomes. The condensin complex probably introduces positive supercoils into relaxed DNA in the presence of type I topoisomerases and converts nicked DNA into positive knotted forms in the presence of type II topoisomerases. The condensin complex probably also plays a role during interphase in processes such as DNA repair. This chain is Condensin complex subunit 2 (cnd2), found in Schizosaccharomyces pombe (strain 972 / ATCC 24843) (Fission yeast).